A 122-amino-acid chain; its full sequence is Glycine cleavage system H protein (122 aa).

One can recognise a Lipoyl-binding domain in the interval 19 to 101; sequence VATVGITDYA…QGKAWFFKIK (83 aa). Position 60 is an N6-lipoyllysine (lysine 60).

Belongs to the GcvH family. The glycine cleavage system is composed of four proteins: P, T, L and H. The cofactor is (R)-lipoate.

The glycine cleavage system catalyzes the degradation of glycine. The H protein shuttles the methylamine group of glycine from the P protein to the T protein. This Bradyrhizobium diazoefficiens (strain JCM 10833 / BCRC 13528 / IAM 13628 / NBRC 14792 / USDA 110) protein is Glycine cleavage system H protein.